We begin with the raw amino-acid sequence, 145 residues long: Small ribosomal subunit protein uS19 (145 aa).

A2 carries the N-acetylalanine modification. K108 is covalently cross-linked (Glycyl lysine isopeptide (Lys-Gly) (interchain with G-Cter in SUMO2)).

The protein belongs to the universal ribosomal protein uS19 family. In terms of assembly, component of the small ribosomal subunit.

The protein localises to the cytoplasm. Its function is as follows. Component of the small ribosomal subunit. The ribosome is a large ribonucleoprotein complex responsible for the synthesis of proteins in the cell. This is Small ribosomal subunit protein uS19 (RPS15) from Bos taurus (Bovine).